Consider the following 329-residue polypeptide: Quinone oxidoreductase (329 aa).

At Ala2 the chain carries N-acetylalanine. The residue at position 23 (Lys23) is an N6-acetyllysine. Residues Tyr53, 158–161, Gly181, His200, Asn229, 246–249, and 269–271 contribute to the NADP(+) site; these read SGGV, VGSR, and VTV. Residue Ser248 is modified to Phosphoserine. Lys296 carries the post-translational modification N6-succinyllysine.

The protein belongs to the zinc-containing alcohol dehydrogenase family. Quinone oxidoreductase subfamily. Homotetramer.

The protein resides in the cytoplasm. It carries out the reaction 2 a quinone + NADPH + H(+) = 2 a 1,4-benzosemiquinone + NADP(+). Its function is as follows. Does not have alcohol dehydrogenase activity. Binds NADP and acts through a one-electron transfer process. Orthoquinones, such as 1,2-naphthoquinone or 9,10-phenanthrenequinone, are the best substrates (in vitro). May act in the detoxification of xenobiotics. Interacts with (AU)-rich elements (ARE) in the 3'-UTR of target mRNA species and enhances their stability. NADPH binding interferes with mRNA binding. The chain is Quinone oxidoreductase (CRYZ) from Pongo abelii (Sumatran orangutan).